A 269-amino-acid chain; its full sequence is Nitrogen regulatory protein DAL80 (269 aa).

The GATA-type zinc-finger motif lies at 31–55 (CQNCFTVKTPLWRRDEHGTVLCNAC).

The protein resides in the nucleus. In terms of biological role, negative regulator of multiple nitrogen catabolic genes including the allantoin pathway genes. The polypeptide is Nitrogen regulatory protein DAL80 (DAL80) (Saccharomyces cerevisiae (strain ATCC 204508 / S288c) (Baker's yeast)).